A 162-amino-acid chain; its full sequence is Peptide deformylase-like (162 aa).

Belongs to the polypeptide deformylase family.

This is Peptide deformylase-like from Staphylococcus aureus (strain COL).